Reading from the N-terminus, the 461-residue chain is V-type ATP synthase beta chain (461 aa).

It belongs to the ATPase alpha/beta chains family.

Produces ATP from ADP in the presence of a proton gradient across the membrane. The V-type beta chain is a regulatory subunit. The chain is V-type ATP synthase beta chain from Clostridium botulinum (strain ATCC 19397 / Type A).